The chain runs to 79 residues: Large ribosomal subunit protein uL24 (79 aa).

This sequence belongs to the universal ribosomal protein uL24 family. As to quaternary structure, part of the 50S ribosomal subunit.

In terms of biological role, one of two assembly initiator proteins, it binds directly to the 5'-end of the 23S rRNA, where it nucleates assembly of the 50S subunit. Functionally, one of the proteins that surrounds the polypeptide exit tunnel on the outside of the subunit. The chain is Large ribosomal subunit protein uL24 from Lactobacillus gasseri (strain ATCC 33323 / DSM 20243 / BCRC 14619 / CIP 102991 / JCM 1131 / KCTC 3163 / NCIMB 11718 / NCTC 13722 / AM63).